The primary structure comprises 151 residues: Prefoldin subunit alpha (151 aa).

The interval 120 to 151 (TVEEETASLEEKAQQAQQQQMQQLQQMQQEDE) is disordered. The segment covering 133–151 (QQAQQQQMQQLQQMQQEDE) has biased composition (low complexity).

It belongs to the prefoldin subunit alpha family. Heterohexamer of two alpha and four beta subunits.

The protein resides in the cytoplasm. Its function is as follows. Molecular chaperone capable of stabilizing a range of proteins. Seems to fulfill an ATP-independent, HSP70-like function in archaeal de novo protein folding. This chain is Prefoldin subunit alpha, found in Natronomonas pharaonis (strain ATCC 35678 / DSM 2160 / CIP 103997 / JCM 8858 / NBRC 14720 / NCIMB 2260 / Gabara) (Halobacterium pharaonis).